The sequence spans 318 residues: UDP-N-acetylenolpyruvoylglucosamine reductase (318 aa).

One can recognise an FAD-binding PCMH-type domain in the interval 39 to 202 (VGGPADLLVR…TRVQLTLRPG (164 aa)). Arg-182 is a catalytic residue. Over residues 214–223 (DRDGRRRTQP) the composition is skewed to basic and acidic residues. The tract at residues 214-235 (DRDGRRRTQPLDRPTFGSTFTN) is disordered. Ser-231 functions as the Proton donor in the catalytic mechanism. The active site involves Glu-301.

The protein belongs to the MurB family. Requires FAD as cofactor.

The protein resides in the cytoplasm. The catalysed reaction is UDP-N-acetyl-alpha-D-muramate + NADP(+) = UDP-N-acetyl-3-O-(1-carboxyvinyl)-alpha-D-glucosamine + NADPH + H(+). Its pathway is cell wall biogenesis; peptidoglycan biosynthesis. Functionally, cell wall formation. The protein is UDP-N-acetylenolpyruvoylglucosamine reductase of Anaeromyxobacter sp. (strain Fw109-5).